A 206-amino-acid chain; its full sequence is Thymidylate kinase (206 aa).

Residue 11–18 (GIDGAGKT) participates in ATP binding.

This sequence belongs to the thymidylate kinase family.

It catalyses the reaction dTMP + ATP = dTDP + ADP. Phosphorylation of dTMP to form dTDP in both de novo and salvage pathways of dTTP synthesis. The chain is Thymidylate kinase from Burkholderia pseudomallei (strain 1106a).